The sequence spans 74 residues: CLAVATA3/ESR (CLE)-related protein 19 (74 aa).

A signal peptide spans 1-24 (MKIKGLMILASSLLILAFIHQSES). 2 N-linked (GlcNAc...) asparagine glycosylation sites follow: Asn34 and Asn54. Residues Pro65 and Pro68 each carry the hydroxyproline modification. O-linked (Ara...) hydroxyproline glycosylation is present at Pro68.

Belongs to the CLV3/ESR signal peptide family. The O-glycosylation (arabinosylation) of the hydroxyproline Pro-68 enhances binding affinity of the CLE19p peptide for its receptor. Mostly expressed in heart-shape embryos, pollen and young flower buds, and, to a lower extent, in inflorescence, leaves and roots.

It localises to the secreted. Its subcellular location is the extracellular space. Functionally, extracellular signal peptide that regulates cell fate. Represses root apical meristem maintenance. The polypeptide is CLAVATA3/ESR (CLE)-related protein 19 (Arabidopsis thaliana (Mouse-ear cress)).